Reading from the N-terminus, the 97-residue chain is Aspartyl/glutamyl-tRNA(Asn/Gln) amidotransferase subunit C (97 aa).

This sequence belongs to the GatC family. In terms of assembly, heterotrimer of A, B and C subunits.

The catalysed reaction is L-glutamyl-tRNA(Gln) + L-glutamine + ATP + H2O = L-glutaminyl-tRNA(Gln) + L-glutamate + ADP + phosphate + H(+). It carries out the reaction L-aspartyl-tRNA(Asn) + L-glutamine + ATP + H2O = L-asparaginyl-tRNA(Asn) + L-glutamate + ADP + phosphate + 2 H(+). Allows the formation of correctly charged Asn-tRNA(Asn) or Gln-tRNA(Gln) through the transamidation of misacylated Asp-tRNA(Asn) or Glu-tRNA(Gln) in organisms which lack either or both of asparaginyl-tRNA or glutaminyl-tRNA synthetases. The reaction takes place in the presence of glutamine and ATP through an activated phospho-Asp-tRNA(Asn) or phospho-Glu-tRNA(Gln). This chain is Aspartyl/glutamyl-tRNA(Asn/Gln) amidotransferase subunit C, found in Listeria innocua serovar 6a (strain ATCC BAA-680 / CLIP 11262).